The chain runs to 325 residues: Malate dehydrogenase (325 aa).

Position 7–13 (7–13 (GSTGRVG)) interacts with NADP(+). Arg-84 and Arg-90 together coordinate substrate. Residues Asn-97 and 120 to 122 (VTN) each bind NADP(+). Positions 122 and 153 each coordinate substrate. Catalysis depends on His-177, which acts as the Proton acceptor.

This sequence belongs to the LDH/MDH superfamily.

It catalyses the reaction (S)-malate + NADP(+) = oxaloacetate + NADPH + H(+). The enzyme catalyses (S)-malate + NAD(+) = oxaloacetate + NADH + H(+). In terms of biological role, catalyzes the reversible oxidation of malate to oxaloacetate. Can use NAD(+) and NADP(+) with similar specific activity. The protein is Malate dehydrogenase of Methanothermobacter marburgensis (strain ATCC BAA-927 / DSM 2133 / JCM 14651 / NBRC 100331 / OCM 82 / Marburg) (Methanobacterium thermoautotrophicum).